Reading from the N-terminus, the 660-residue chain is Peroxisomal acyl-coenzyme A oxidase 1 (660 aa).

At Ser-26 the chain carries Phosphoserine. An N6-succinyllysine mark is found at Lys-89 and Lys-90. FAD contacts are provided by Thr-139 and Gly-178. Lys-216 is modified (N6-acetyllysine). Residue Lys-241 is modified to N6-succinyllysine. N6-acetyllysine occurs at positions 255, 267, and 272. N6-succinyllysine is present on Lys-349. Glu-421 functions as the Proton acceptor in the catalytic mechanism. 2 positions are modified to N6-acetyllysine; alternate: Lys-437 and Lys-446. 2 positions are modified to N6-succinyllysine; alternate: Lys-437 and Lys-446. Lys-500 carries the post-translational modification N6-acetyllysine. Residue Lys-512 is modified to N6-acetyllysine; alternate. Position 512 is an N6-succinyllysine; alternate (Lys-512). N6-succinyllysine is present on Lys-542. Lys-637 is subject to N6-acetyllysine; alternate. N6-succinyllysine; alternate is present on Lys-637. Lys-643 carries the post-translational modification N6-succinyllysine. Position 649 is a phosphoserine (Ser-649). An N6-acetyllysine modification is found at Lys-651. Lys-654 is modified (N6-succinyllysine). The Microbody targeting signal motif lies at 658–660 (SKL).

This sequence belongs to the acyl-CoA oxidase family. As to quaternary structure, homodimer. Interacts with LONP2. FAD is required as a cofactor.

The protein resides in the peroxisome. The catalysed reaction is a 2,3-saturated acyl-CoA + O2 = a (2E)-enoyl-CoA + H2O2. It catalyses the reaction hexadecanoyl-CoA + O2 = (2E)-hexadecenoyl-CoA + H2O2. It carries out the reaction dodecanoyl-CoA + O2 = (2E)-dodecenoyl-CoA + H2O2. The enzyme catalyses octanoyl-CoA + O2 = (2E)-octenoyl-CoA + H2O2. The catalysed reaction is decanoyl-CoA + O2 = (2E)-decenoyl-CoA + H2O2. It catalyses the reaction tetradecanoyl-CoA + O2 = (2E)-tetradecenoyl-CoA + H2O2. It carries out the reaction hexadecanedioyl-CoA + O2 = (2E)-hexadecenedioyl-CoA + H2O2. The enzyme catalyses tetracosanoyl-CoA + O2 = (2E)-tetracosenoyl-CoA + H2O2. The catalysed reaction is glutaryl-CoA + O2 = (2E)-glutaconyl-CoA + H2O2. It catalyses the reaction hexanoyl-CoA + O2 = (2E)-hexenoyl-CoA + H2O2. It carries out the reaction octadecanoyl-CoA + O2 = (2E)-octadecenoyl-CoA + H2O2. The enzyme catalyses (5Z,8Z,11Z,14Z,17Z)-eicosapentaenoyl-CoA + O2 = (2E,5Z,8Z,11Z,14Z,17Z)-icosahexaenoyl-CoA + H2O2. The catalysed reaction is (6Z,9Z,12Z,15Z,18Z,21Z)-tetracosahexaenoyl-CoA + O2 = (2E,6Z,9Z,12Z,15Z,18Z,21Z)-tetracosaheptaenoyl-CoA + H2O2. Its pathway is lipid metabolism; peroxisomal fatty acid beta-oxidation. Involved in the initial and rate-limiting step of peroxisomal beta-oxidation of straight-chain saturated and unsaturated very-long-chain fatty acids. Catalyzes the desaturation of fatty acyl-CoAs such as palmitoyl-CoA (hexadecanoyl-CoA) to 2-trans-enoyl-CoAs ((2E)-enoyl-CoAs) such as (2E)-hexadecenoyl-CoA, and donates electrons directly to molecular oxygen (O(2)), thereby producing hydrogen peroxide (H(2)O(2)). Functionally, shows highest activity against medium-chain fatty acyl-CoAs. Shows optimum activity with a chain length of 10 carbons (decanoyl-CoA) in vitro. In terms of biological role, is active against a much broader range of substrates and shows activity towards long-chain acyl-CoAs. This is Peroxisomal acyl-coenzyme A oxidase 1 from Pongo abelii (Sumatran orangutan).